A 254-amino-acid chain; its full sequence is Imidazole glycerol phosphate synthase subunit HisF (254 aa).

Catalysis depends on residues D12 and D132.

This sequence belongs to the HisA/HisF family. In terms of assembly, heterodimer of HisH and HisF.

Its subcellular location is the cytoplasm. The catalysed reaction is 5-[(5-phospho-1-deoxy-D-ribulos-1-ylimino)methylamino]-1-(5-phospho-beta-D-ribosyl)imidazole-4-carboxamide + L-glutamine = D-erythro-1-(imidazol-4-yl)glycerol 3-phosphate + 5-amino-1-(5-phospho-beta-D-ribosyl)imidazole-4-carboxamide + L-glutamate + H(+). The protein operates within amino-acid biosynthesis; L-histidine biosynthesis; L-histidine from 5-phospho-alpha-D-ribose 1-diphosphate: step 5/9. Its function is as follows. IGPS catalyzes the conversion of PRFAR and glutamine to IGP, AICAR and glutamate. The HisF subunit catalyzes the cyclization activity that produces IGP and AICAR from PRFAR using the ammonia provided by the HisH subunit. This is Imidazole glycerol phosphate synthase subunit HisF from Symbiobacterium thermophilum (strain DSM 24528 / JCM 14929 / IAM 14863 / T).